Consider the following 459-residue polypeptide: Flagellar radial spoke protein 6 (459 aa).

Arginine 267 is subject to Asymmetric dimethylarginine. Residues 309 to 330 (QGRTVTHKRDPPDEEEEPEKNF) form a disordered region. Residue arginine 398 is modified to Asymmetric dimethylarginine. Residues 418–459 (CPPPPPVPQWGAPAAGVEGGQQLLLECNDLPPKPAPPEEEDE) form a disordered region.

It belongs to the flagellar radial spoke RSP4/6 family. In terms of assembly, the radial spoke head is made of five different polypeptides (RSP1, RSP4, RSP6, RSP9, and RSP10). Post-translationally, asymmetrically dimethylated at Arg-267 and Arg-398 during flagellum resorption. Probably methylated by PRMT1.

It localises to the cytoplasm. The protein resides in the cytoskeleton. The protein localises to the flagellum axoneme. Its function is as follows. Flagellar radial spokes contribute to the regulation of dynein arm activity and thus the pattern of flagellar bending. They consist of a thin stalk, which is attached to the a subfiber of the outer doublet microtubule, and a bulbous head, which is attached to the stalk and appears to interact with the projections from the central pair of microtubules. This Chlamydomonas reinhardtii (Chlamydomonas smithii) protein is Flagellar radial spoke protein 6 (RSP6).